The sequence spans 72 residues: UPF0346 protein EF_1680 (72 aa).

It belongs to the UPF0346 family.

The polypeptide is UPF0346 protein EF_1680 (Enterococcus faecalis (strain ATCC 700802 / V583)).